We begin with the raw amino-acid sequence, 972 residues long: POM121-like protein 2 (972 aa).

Disordered stretches follow at residues 1–67 (MGSY…PANP), 281–302 (LKKA…SGQL), 328–359 (TEED…IPEM), 406–431 (GISS…PVTD), 676–726 (LGLS…AIDG), and 953–972 (SKTL…TYKK). A compositionally biased stretch (basic residues) spans 40 to 57 (RVQHVHRAQPARRHRPAR). Polar residues-rich tracts occupy residues 287-302 (SPNS…SGQL) and 339-352 (VPSN…TGTA). Residues 413–431 (PSIASTQASPSSPTTPVTD) show a composition bias toward low complexity. Residues 677-696 (GLSSTNQPPVTSSNSNVTSA) show a composition bias toward polar residues. A compositionally biased stretch (low complexity) spans 697–706 (LTSSLGSSPK).

This sequence belongs to the POM121 family.

The protein is POM121-like protein 2 (Pom121l2) of Mus musculus (Mouse).